Here is a 688-residue protein sequence, read N- to C-terminus: G-protein coupled receptor-associated protein LMBRD2 (688 aa).

Residues 1-3 (MSG) lie on the Extracellular side of the membrane. The helical transmembrane segment at 4–21 (AALGLEIVFVFFLALFLL) threads the bilayer. The Cytoplasmic segment spans residues 22-32 (HRYGDFKKQHR). The helical transmembrane segment at 33–53 (LVIIATLLAWYLCFLIVFILP) threads the bilayer. Residues 54 to 99 (LDVSTTIYNRCKLAVNSSPAESNSSFVTLAPSKQQCFKPWSYIPNG) are Extracellular-facing. N-linked (GlcNAc...) asparagine glycosylation occurs at asparagine 76. The chain crosses the membrane as a helical span at residues 100–120 (IMPIFWRVVYWTSQFLTWILL). Topologically, residues 121–144 (PFMQSYARSGGFSITGKIKTALIE) are cytoplasmic. The helical transmembrane segment at 145–165 (NAIYYGTYLLIFGAFLIYVAV) threads the bilayer. At 166-180 (NPKFNLQWNQLQTIG) the chain is on the extracellular side. Residues 181 to 201 (IAAANTWGLFLLVLLLGYGLV) form a helical membrane-spanning segment. The Cytoplasmic segment spans residues 202 to 381 (EIPRSHWNGA…ECLLRPWFYR (180 aa)). Positions 222 to 254 (FKAAKLMTEKADAEENLEDIMEEVRKVSESIKY) form a coiled coil. The chain crosses the membrane as a helical span at residues 382–402 (VLAVVLAAFSVIVVWSECTFF). The Extracellular segment spans residues 403–426 (STRPVLSLVAVFIQLAEKTYNYIY). Residues 427–447 (IEMACFLTIFFLSICVYSTVF) form a helical membrane-spanning segment. Over 448–467 (RIRVFNYYYLASHHQTDAYS) the chain is Cytoplasmic. A helical membrane pass occupies residues 468–488 (LLFSGMLFCRLTPPLCLNFLG). Residues 489-515 (LTHMDATISHTDAQPTAYTSIMGSMKV) are Extracellular-facing. Residues 516–536 (LSFIADGFYIYYPMLVVILCI) traverse the membrane as a helical segment. The Cytoplasmic segment spans residues 537–688 (ATYFSLGTRC…MSRSRIFEDV (152 aa)). The span at 600 to 617 (REDSTRNRVVHTEQKESS) shows a compositional bias: basic and acidic residues. The segment at 600-673 (REDSTRNRVV…ESDSGRYQPG (74 aa)) is disordered. Polar residues predominate over residues 618–634 (FSETNTNRPLSKYTRTN). Over residues 635–644 (GRTERDRIEL) the composition is skewed to basic and acidic residues.

It belongs to the LIMR family.

The protein localises to the cell membrane. In terms of biological role, may associate with G-protein coupled receptors and regulate downstream signaling pathways. This chain is G-protein coupled receptor-associated protein LMBRD2, found in Gallus gallus (Chicken).